The sequence spans 434 residues: Hydrogenobyrinate a,c-diamide synthase (434 aa).

A GATase cobBQ-type domain is found at 243 to 434 (RIAVARDIAF…MHLIDVAGAA (192 aa)). Residue Cys326 is the Nucleophile of the active site.

This sequence belongs to the CobB/CbiA family. In terms of assembly, homodimer. Mg(2+) serves as cofactor.

It catalyses the reaction hydrogenobyrinate + 2 L-glutamine + 2 ATP + 2 H2O = hydrogenobyrinate a,c-diamide + 2 L-glutamate + 2 ADP + 2 phosphate + 2 H(+). It functions in the pathway cofactor biosynthesis; adenosylcobalamin biosynthesis; cob(II)yrinate a,c-diamide from precorrin-2 (aerobic route): step 9/10. Its function is as follows. Catalyzes the ATP-dependent amidation of the two carboxylate groups at positions a and c of hydrogenobyrinate, using either L-glutamine or ammonia as the nitrogen source. To a much lesser extent, can also use cobyrinate as substrate in vitro, but the physiological substrate is indeed hydrogenobyrinate, as part of the aerobic pathway for cobalamin biosynthesis. The protein is Hydrogenobyrinate a,c-diamide synthase of Sinorhizobium sp.